The following is a 179-amino-acid chain: Large ribosomal subunit protein uL6 (179 aa).

It belongs to the universal ribosomal protein uL6 family. Part of the 50S ribosomal subunit.

In terms of biological role, this protein binds to the 23S rRNA, and is important in its secondary structure. It is located near the subunit interface in the base of the L7/L12 stalk, and near the tRNA binding site of the peptidyltransferase center. The polypeptide is Large ribosomal subunit protein uL6 (Mycobacteroides abscessus (strain ATCC 19977 / DSM 44196 / CCUG 20993 / CIP 104536 / JCM 13569 / NCTC 13031 / TMC 1543 / L948) (Mycobacterium abscessus)).